Consider the following 507-residue polypeptide: Transposase for insertion sequences IS1326/IS1353 (507 aa).

One can recognise an HTH IS21-type domain in the interval 6–68; that stretch reads ILSAIRRWHF…PFEPKLRQWL (63 aa). Positions 19-40 form a DNA-binding region, H-T-H motif; it reads ASIREIARRSGLSRNTVRKYLQ. The Integrase catalytic domain maps to 122–302; the sequence is GCFIPLRFAC…TVQEAFADEQ (181 aa).

Belongs to the transposase IS21/IS408/IS1162 family.

In terms of biological role, required for the transposition of the insertion element. This Pseudomonas aeruginosa protein is Transposase for insertion sequences IS1326/IS1353 (istA).